Consider the following 529-residue polypeptide: Peptide chain release factor 3 (529 aa).

The tr-type G domain maps to 11–280 (NKRRTFAIIS…GLTKWAPTPL (270 aa)). GTP-binding positions include 20-27 (SHPDAGKT), 88-92 (DTPGH), and 142-145 (NKCD).

Belongs to the TRAFAC class translation factor GTPase superfamily. Classic translation factor GTPase family. PrfC subfamily.

The protein resides in the cytoplasm. In terms of biological role, increases the formation of ribosomal termination complexes and stimulates activities of RF-1 and RF-2. It binds guanine nucleotides and has strong preference for UGA stop codons. It may interact directly with the ribosome. The stimulation of RF-1 and RF-2 is significantly reduced by GTP and GDP, but not by GMP. In Pseudoalteromonas translucida (strain TAC 125), this protein is Peptide chain release factor 3.